Reading from the N-terminus, the 444-residue chain is Zinc finger CCCH domain-containing protein 63 (444 aa).

3 consecutive C3H1-type zinc fingers follow at residues 56–84, 101–129, and 147–175; these read RIGEPDCSYYMRTGLCRFGMTCKFNHPAD, RIGQPECQYYLKTGTCKFGATCKFHHPRE, and RPNEKECAYYLRTGQCKFGSTCKFHHPQP. Positions 251–276 are disordered; that stretch reads GSSSSDDQQRTAGGAQYYTGSRHSET. 2 consecutive C3H1-type zinc fingers follow at residues 309 to 337 and 355 to 383; these read RPDQPECQFYMKTGDCKFGAVCKFHHPKE and RPGEPICTFYSRYGICKFGPNCKFDHPMG. Positions 405-444 are disordered; it reads PVPAHSEVSPDNVSGRSRRITHSDSQQIPSGERGTEREAS.

This is Zinc finger CCCH domain-containing protein 63 from Oryza sativa subsp. japonica (Rice).